We begin with the raw amino-acid sequence, 460 residues long: Citrate synthase, peroxisomal (460 aa).

A Phosphoserine modification is found at Ser21. Residues Lys218 and Lys239 each participate in a glycyl lysine isopeptide (Lys-Gly) (interchain with G-Cter in ubiquitin) cross-link. Catalysis depends on residues His293 and His339. Glycyl lysine isopeptide (Lys-Gly) (interchain with G-Cter in ubiquitin) cross-links involve residues Lys354 and Lys385. Residue Asp394 is part of the active site. The C-terminal peroxisome targeting signal (PTS1) motif lies at 458-460; sequence SKL.

It belongs to the citrate synthase family. As to quaternary structure, interacts with F-box protein UCC1. Post-translationally, ubiquitinated by the E3 ubiquitin-protein ligase complex SCF(UCC1), which leads to its degradation by the proteasome. Ubiquitination is prevented by oxaloacetate, suggesting the existence of an oxaloacetate-dependent positive feedback loop that stabilizes CIT2.

It is found in the cytoplasm. The protein resides in the peroxisome. It catalyses the reaction oxaloacetate + acetyl-CoA + H2O = citrate + CoA + H(+). It functions in the pathway carbohydrate metabolism; tricarboxylic acid cycle; isocitrate from oxaloacetate: step 1/2. In terms of biological role, peroxisomal citrate synthase involved in the citrate homeostasis. Catalyzes the condensation of acetyl coenzyme A and oxaloacetate to form citrate. Citrate synthase is the rate-limiting enzyme of the tricarboxylic acid (TCA) cycle. The chain is Citrate synthase, peroxisomal from Saccharomyces cerevisiae (strain ATCC 204508 / S288c) (Baker's yeast).